The sequence spans 340 residues: Ferrochelatase (340 aa).

Positions 189 and 292 each coordinate Fe cation.

It belongs to the ferrochelatase family.

The protein resides in the cytoplasm. It carries out the reaction heme b + 2 H(+) = protoporphyrin IX + Fe(2+). It functions in the pathway porphyrin-containing compound metabolism; protoheme biosynthesis; protoheme from protoporphyrin-IX: step 1/1. In terms of biological role, catalyzes the ferrous insertion into protoporphyrin IX. This Pseudomonas aeruginosa (strain LESB58) protein is Ferrochelatase.